We begin with the raw amino-acid sequence, 488 residues long: UDP-N-acetylmuramate--L-alanine ligase (488 aa).

127-133 contacts ATP; it reads GTHGKTT.

This sequence belongs to the MurCDEF family.

Its subcellular location is the cytoplasm. The catalysed reaction is UDP-N-acetyl-alpha-D-muramate + L-alanine + ATP = UDP-N-acetyl-alpha-D-muramoyl-L-alanine + ADP + phosphate + H(+). It participates in cell wall biogenesis; peptidoglycan biosynthesis. Cell wall formation. This chain is UDP-N-acetylmuramate--L-alanine ligase, found in Shewanella oneidensis (strain ATCC 700550 / JCM 31522 / CIP 106686 / LMG 19005 / NCIMB 14063 / MR-1).